Consider the following 462-residue polypeptide: Cysteine--tRNA ligase (462 aa).

C29 is a binding site for Zn(2+). The 'HIGH' region signature appears at 31–41 (MTVYDLCHLGH). The Zn(2+) site is built by C217, H242, and E246. A 'KMSKS' region motif is present at residues 274-278 (KMSKS). K277 is an ATP binding site.

It belongs to the class-I aminoacyl-tRNA synthetase family. In terms of assembly, monomer. Requires Zn(2+) as cofactor.

The protein resides in the cytoplasm. The catalysed reaction is tRNA(Cys) + L-cysteine + ATP = L-cysteinyl-tRNA(Cys) + AMP + diphosphate. The polypeptide is Cysteine--tRNA ligase (Polaromonas sp. (strain JS666 / ATCC BAA-500)).